Here is an 851-residue protein sequence, read N- to C-terminus: DNA mismatch repair protein MutS (851 aa).

602–609 (GPNMSGKS) contacts ATP.

It belongs to the DNA mismatch repair MutS family.

Functionally, this protein is involved in the repair of mismatches in DNA. It is possible that it carries out the mismatch recognition step. This protein has a weak ATPase activity. This is DNA mismatch repair protein MutS from Streptococcus pyogenes serotype M4 (strain MGAS10750).